We begin with the raw amino-acid sequence, 133 residues long: Holo-[acyl-carrier-protein] synthase (133 aa).

The Mg(2+) site is built by Asp8 and Glu57.

Belongs to the P-Pant transferase superfamily. AcpS family. The cofactor is Mg(2+).

Its subcellular location is the cytoplasm. The catalysed reaction is apo-[ACP] + CoA = holo-[ACP] + adenosine 3',5'-bisphosphate + H(+). In terms of biological role, transfers the 4'-phosphopantetheine moiety from coenzyme A to a Ser of acyl-carrier-protein. The polypeptide is Holo-[acyl-carrier-protein] synthase (Chelativorans sp. (strain BNC1)).